Reading from the N-terminus, the 685-residue chain is Hemocyanin subunit X (685 aa).

Residues 1 to 20 (MKYCTESLILILAVIGCISA) form the signal peptide. 3 residues coordinate Cu cation: histidine 210, histidine 214, and histidine 243. Asparagine 329 carries N-linked (GlcNAc...) asparagine glycosylation. The Cu cation site is built by histidine 367, histidine 371, and histidine 407. Residues cysteine 577 and cysteine 625 are joined by a disulfide bond.

Belongs to the tyrosinase family. Hemocyanin subfamily.

It is found in the secreted. The protein resides in the extracellular space. In terms of biological role, hemocyanins are copper-containing oxygen carriers occurring freely dissolved in the hemolymph of many mollusks and arthropods. The protein is Hemocyanin subunit X (HCX) of Scutigera coleoptrata (House centipede).